Reading from the N-terminus, the 158-residue chain is S-ribosylhomocysteine lyase (158 aa).

Positions 55, 59, and 127 each coordinate Fe cation.

Belongs to the LuxS family. Homodimer. It depends on Fe cation as a cofactor.

The enzyme catalyses S-(5-deoxy-D-ribos-5-yl)-L-homocysteine = (S)-4,5-dihydroxypentane-2,3-dione + L-homocysteine. In terms of biological role, involved in the synthesis of autoinducer 2 (AI-2) which is secreted by bacteria and is used to communicate both the cell density and the metabolic potential of the environment. The regulation of gene expression in response to changes in cell density is called quorum sensing. Catalyzes the transformation of S-ribosylhomocysteine (RHC) to homocysteine (HC) and 4,5-dihydroxy-2,3-pentadione (DPD). This Geobacillus thermodenitrificans (strain NG80-2) protein is S-ribosylhomocysteine lyase.